We begin with the raw amino-acid sequence, 569 residues long: Estrogen receptor (569 aa).

Positions 1–151 (MYPKEEHSAG…GFDSGKETRF (151 aa)) are modulating. Residues 28 to 37 (PTQTFGTSSP) are compositionally biased toward polar residues. Residues 28–65 (PTQTFGTSSPAEPASVGYYPAPPDPHEEHLQTLGGGSS) form a disordered region. 2 consecutive NR C4-type zinc fingers follow at residues 152–172 (CAVCSDYASGYHYGVWSCEGC) and 188–212 (CPATNQCTIDRNRRKSCQACRLRKC). The nuclear receptor DNA-binding region spans 152 to 217 (CAVCSDYASG…RLRKCYEVGM (66 aa)). The segment at 218-278 (MKGGIRKDRG…SGGVVSTLCM (61 aa)) is hinge. A disordered region spans residues 223-271 (RKDRGGRSVRRERRRSSNEDRDKSSSDQCSRAGVRTTGPQDKRKKRSGG). Basic and acidic residues predominate over residues 237–247 (RSSNEDRDKSS). In terms of domain architecture, NR LBD spans 279 to 515 (SPDQVLLLLL…DLLLEMLDAQ (237 aa)). The segment covering 523–532 (VQRVWSQSEK) has biased composition (polar residues). A disordered region spans residues 523-569 (VQRVWSQSEKNPPSTPTTSSSSSNNSPRGGAAAIQSNGACHSHSPDP). Over residues 538-549 (PTTSSSSSNNSP) the composition is skewed to low complexity.

It belongs to the nuclear hormone receptor family. NR3 subfamily. As to quaternary structure, binds DNA as a homodimer. Can form a heterodimer with ER-beta.

The protein resides in the nucleus. Its function is as follows. The steroid hormones and their receptors are involved in the regulation of eukaryotic gene expression and affect cellular proliferation and differentiation in target tissues. The sequence is that of Estrogen receptor (esr1) from Danio rerio (Zebrafish).